The primary structure comprises 153 residues: Xanthine-guanine phosphoribosyltransferase (153 aa).

5-phospho-alpha-D-ribose 1-diphosphate contacts are provided by residues 37–38 (RG), arginine 69, and 88–96 (DDLVDTGGT). Arginine 69 provides a ligand contact to GMP. Aspartate 89 is a binding site for Mg(2+). Positions 92 and 135 each coordinate guanine. Xanthine is bound by residues aspartate 92 and isoleucine 135. GMP is bound by residues 92 to 96 (DTGGT) and 134 to 135 (WI).

It belongs to the purine/pyrimidine phosphoribosyltransferase family. XGPT subfamily. In terms of assembly, homotetramer. The cofactor is Mg(2+).

It localises to the cell inner membrane. It catalyses the reaction GMP + diphosphate = guanine + 5-phospho-alpha-D-ribose 1-diphosphate. The enzyme catalyses XMP + diphosphate = xanthine + 5-phospho-alpha-D-ribose 1-diphosphate. The catalysed reaction is IMP + diphosphate = hypoxanthine + 5-phospho-alpha-D-ribose 1-diphosphate. The protein operates within purine metabolism; GMP biosynthesis via salvage pathway; GMP from guanine: step 1/1. It functions in the pathway purine metabolism; XMP biosynthesis via salvage pathway; XMP from xanthine: step 1/1. Its function is as follows. Purine salvage pathway enzyme that catalyzes the transfer of the ribosyl-5-phosphate group from 5-phospho-alpha-D-ribose 1-diphosphate (PRPP) to the N9 position of the 6-oxopurines guanine and xanthine to form the corresponding ribonucleotides GMP (guanosine 5'-monophosphate) and XMP (xanthosine 5'-monophosphate), with the release of PPi. To a lesser extent, also acts on hypoxanthine. In Photorhabdus laumondii subsp. laumondii (strain DSM 15139 / CIP 105565 / TT01) (Photorhabdus luminescens subsp. laumondii), this protein is Xanthine-guanine phosphoribosyltransferase.